The primary structure comprises 589 residues: DNA ligase (589 aa).

E250 serves as a coordination point for ATP. K252 functions as the N6-AMP-lysine intermediate in the catalytic mechanism. Residues R257, R272, E302, F342, R417, and K423 each contribute to the ATP site.

Belongs to the ATP-dependent DNA ligase family. The cofactor is Mg(2+).

The enzyme catalyses ATP + (deoxyribonucleotide)n-3'-hydroxyl + 5'-phospho-(deoxyribonucleotide)m = (deoxyribonucleotide)n+m + AMP + diphosphate.. DNA ligase that seals nicks in double-stranded DNA during DNA replication, DNA recombination and DNA repair. The protein is DNA ligase of Cenarchaeum symbiosum (strain A).